The sequence spans 407 residues: uncharacterized protein (407 aa).

Coiled-coil stretches lie at residues 96–130 (TDSI…FKNE) and 287–345 (MKCY…AKTS). Over residues 302–317 (EKRKDNLQKQNEEAAK) the composition is skewed to basic and acidic residues. Residues 302–394 (EKRKDNLQKQ…NMDPAINESD (93 aa)) form a disordered region. Basic residues predominate over residues 318-331 (ITKRKNRQEKRREK). Low complexity predominate over residues 344-370 (TSVSSIPDTSSTTTSTNSTPTNTKSNS).

This is an uncharacterized protein from Acanthamoeba polyphaga (Amoeba).